We begin with the raw amino-acid sequence, 140 residues long: Large ribosomal subunit protein uL16 (140 aa).

Positions 1 to 16 (MLMPKRVKHRKQMKGR) are enriched in basic residues. The disordered stretch occupies residues 1–20 (MLMPKRVKHRKQMKGRMKGD).

Belongs to the universal ribosomal protein uL16 family. Part of the 50S ribosomal subunit.

Binds 23S rRNA and is also seen to make contacts with the A and possibly P site tRNAs. The protein is Large ribosomal subunit protein uL16 of Geobacter sulfurreducens (strain ATCC 51573 / DSM 12127 / PCA).